Here is a 359-residue protein sequence, read N- to C-terminus: Cytoplasmic tRNA 2-thiolation protein 1 (359 aa).

The protein belongs to the TtcA family. CTU1/NCS6/ATPBD3 subfamily. As to quaternary structure, interacts with NCS2 and URM1. May act by forming a heterodimer with NCS2. Component of a large molecular weight complex of more than 250 kDa.

It is found in the cytoplasm. The protein resides in the mitochondrion. The protein operates within tRNA modification; 5-methoxycarbonylmethyl-2-thiouridine-tRNA biosynthesis. Its function is as follows. Plays a central role in 2-thiolation of mcm(5)S(2)U at tRNA wobble positions of tRNA(Lys), tRNA(Glu) and tRNA(Gln). Directly binds tRNAs and probably acts by catalyzing adenylation of tRNAs, an intermediate required for 2-thiolation. It is unclear whether it acts as a sulfurtransferase that transfers sulfur from thiocarboxylated URM1 onto the uridine of tRNAs at wobble position. Prior mcm(5) tRNA modification by the elongator complex is required for 2-thiolation. May also be involved in protein urmylation. The chain is Cytoplasmic tRNA 2-thiolation protein 1 from Saccharomyces cerevisiae (strain RM11-1a) (Baker's yeast).